Here is a 466-residue protein sequence, read N- to C-terminus: FBD-associated F-box protein At5g22730 (466 aa).

The F-box domain occupies 27-80; the sequence is EDLISKLPDSLITQILLYLPIKDIVRTSSLSSRWKSLWLLIPRLDLDSEEFQDY. One can recognise an FBD domain in the interval 385-436; sequence DEPIIFSSVPRCLVSSLESVEIKKFNGRPAKMEVARYFLENSGVLQKLVLHL.

This is FBD-associated F-box protein At5g22730 from Arabidopsis thaliana (Mouse-ear cress).